Here is a 275-residue protein sequence, read N- to C-terminus: MIRKPVVAGQFYPGTKNELEEMINSCIQHKFGPGNQIQNNEGIYGVISPHAGYVYSGPTACYSYKAISSKNPELVIILGPNHFGVGKDVATMVNAQWETPLGLVDVDSEAAKEIANNSKYIEIDEFSHSRDHSLEVQIPMLQSIFSEKFKILPIILRDQSLEMAKDVGNAVAQIAKSRNTMIVASSDFTHYEENSFAHSQDKALIEPILEMDVEKFYSVLMEKRVTACGYGAMASVMIACKNLGAVKGELLSYTTSGDVMGDTSSVVGYGAIKFI.

Belongs to the MEMO1 family.

The chain is MEMO1 family protein Nmar_0215 from Nitrosopumilus maritimus (strain SCM1).